Consider the following 600-residue polypeptide: Arginine--tRNA ligase (600 aa).

The 'HIGH' region signature appears at 123–133; the sequence is PNVAKPMHVGH.

The protein belongs to the class-I aminoacyl-tRNA synthetase family. As to quaternary structure, monomer.

Its subcellular location is the cytoplasm. It catalyses the reaction tRNA(Arg) + L-arginine + ATP = L-arginyl-tRNA(Arg) + AMP + diphosphate. The sequence is that of Arginine--tRNA ligase from Caulobacter vibrioides (strain NA1000 / CB15N) (Caulobacter crescentus).